The primary structure comprises 529 residues: Bifunctional purine biosynthesis protein PurH (529 aa).

Positions Met1–Val148 constitute an MGS-like domain. N6-acetyllysine is present on Lys287.

Belongs to the PurH family.

It catalyses the reaction (6R)-10-formyltetrahydrofolate + 5-amino-1-(5-phospho-beta-D-ribosyl)imidazole-4-carboxamide = 5-formamido-1-(5-phospho-D-ribosyl)imidazole-4-carboxamide + (6S)-5,6,7,8-tetrahydrofolate. It carries out the reaction IMP + H2O = 5-formamido-1-(5-phospho-D-ribosyl)imidazole-4-carboxamide. The protein operates within purine metabolism; IMP biosynthesis via de novo pathway; 5-formamido-1-(5-phospho-D-ribosyl)imidazole-4-carboxamide from 5-amino-1-(5-phospho-D-ribosyl)imidazole-4-carboxamide (10-formyl THF route): step 1/1. It participates in purine metabolism; IMP biosynthesis via de novo pathway; IMP from 5-formamido-1-(5-phospho-D-ribosyl)imidazole-4-carboxamide: step 1/1. The chain is Bifunctional purine biosynthesis protein PurH from Escherichia coli O157:H7.